The primary structure comprises 244 residues: DNA repair protein RecO (244 aa).

This sequence belongs to the RecO family.

Its function is as follows. Involved in DNA repair and RecF pathway recombination. This is DNA repair protein RecO from Koribacter versatilis (strain Ellin345).